We begin with the raw amino-acid sequence, 242 residues long: MAKRVLIKFSGEALANEDGHGINSKTLKYIASEIKPLVDSGVEVGLVVGGGNIIRGVNASKEGIIRRSSGDYMGMLATVINAVALQEALEYFGLTARVQSAIEMNEICEPFIVRRAMRHLEKGRIVIFAAGTGNPFFTTDTAATLRAVEIGANMIIKATKVDGVYDKDPHKYPDAKKLDRLTYDEALQDNIKVMDDTAIALAKDNALPIIVCNMFEEGNLYDIIVNNNLEKCSIVTDKKENE.

Lys8–Gly11 is a binding site for ATP. Residue Gly50 participates in UMP binding. ATP is bound by residues Gly51 and Arg55. Residues Asp71 and Thr132–Thr139 each bind UMP. 3 residues coordinate ATP: Thr159, Tyr165, and Asp168.

Belongs to the UMP kinase family. As to quaternary structure, homohexamer.

The protein resides in the cytoplasm. It catalyses the reaction UMP + ATP = UDP + ADP. The protein operates within pyrimidine metabolism; CTP biosynthesis via de novo pathway; UDP from UMP (UMPK route): step 1/1. Its activity is regulated as follows. Inhibited by UTP. Catalyzes the reversible phosphorylation of UMP to UDP. This Nitratiruptor sp. (strain SB155-2) protein is Uridylate kinase.